Consider the following 426-residue polypeptide: Serine hydroxymethyltransferase (426 aa).

(6S)-5,6,7,8-tetrahydrofolate is bound by residues Leu-113 and Gly-117–Leu-119. An N6-(pyridoxal phosphate)lysine modification is found at Lys-222. Ser-363 to Phe-365 is a binding site for (6S)-5,6,7,8-tetrahydrofolate.

Belongs to the SHMT family. Homodimer. It depends on pyridoxal 5'-phosphate as a cofactor.

It is found in the cytoplasm. The enzyme catalyses (6R)-5,10-methylene-5,6,7,8-tetrahydrofolate + glycine + H2O = (6S)-5,6,7,8-tetrahydrofolate + L-serine. It participates in one-carbon metabolism; tetrahydrofolate interconversion. It functions in the pathway amino-acid biosynthesis; glycine biosynthesis; glycine from L-serine: step 1/1. Catalyzes the reversible interconversion of serine and glycine with tetrahydrofolate (THF) serving as the one-carbon carrier. This reaction serves as the major source of one-carbon groups required for the biosynthesis of purines, thymidylate, methionine, and other important biomolecules. Also exhibits THF-independent aldolase activity toward beta-hydroxyamino acids, producing glycine and aldehydes, via a retro-aldol mechanism. The sequence is that of Serine hydroxymethyltransferase from Phocaeicola vulgatus (strain ATCC 8482 / DSM 1447 / JCM 5826 / CCUG 4940 / NBRC 14291 / NCTC 11154) (Bacteroides vulgatus).